Here is a 333-residue protein sequence, read N- to C-terminus: Phosphate acyltransferase (333 aa).

The protein belongs to the PlsX family. As to quaternary structure, homodimer. Probably interacts with PlsY.

The protein resides in the cytoplasm. It catalyses the reaction a fatty acyl-[ACP] + phosphate = an acyl phosphate + holo-[ACP]. The protein operates within lipid metabolism; phospholipid metabolism. Functionally, catalyzes the reversible formation of acyl-phosphate (acyl-PO(4)) from acyl-[acyl-carrier-protein] (acyl-ACP). This enzyme utilizes acyl-ACP as fatty acyl donor, but not acyl-CoA. The sequence is that of Phosphate acyltransferase from Thermosipho melanesiensis (strain DSM 12029 / CIP 104789 / BI429).